Here is a 328-residue protein sequence, read N- to C-terminus: Cytochrome c biogenesis protein CcsA (328 aa).

8 consecutive transmembrane segments (helical) span residues 13-33 (ISFS…LVNL), 46-66 (GIII…IYSG), 73-93 (LYES…VSYF), 101-121 (LNTI…SGLL), 146-166 (MILG…LLVI), 234-254 (IISL…VWAN), 263-283 (WDPK…YLHI), and 295-315 (AIVA…VNLL).

It belongs to the CcmF/CycK/Ccl1/NrfE/CcsA family. May interact with Ccs1.

The protein resides in the plastid. It localises to the chloroplast thylakoid membrane. Required during biogenesis of c-type cytochromes (cytochrome c6 and cytochrome f) at the step of heme attachment. This chain is Cytochrome c biogenesis protein CcsA, found in Arabidopsis thaliana (Mouse-ear cress).